The following is a 230-amino-acid chain: MAHPSQLGFQDAASPVMEELLHFHDHALMIVFLISTLVLYIIVAMVSTKLTNKYILDSQEIEIIWTVLPAVILILIALPSLRILYLMDEINDPHLTIKAMGHQWYWSYEYTDYEDLGFDSYMIPTQDLAPGQFRLLEADHRMVVPVESPIRILISAEDVLHSWAVPALGIKMDAVPGRLNQTAFITSRPGVFYGQCSEICGANHSFMPIVVEAVPLEHFESWSSLMLEDA.

The Mitochondrial intermembrane portion of the chain corresponds to 1 to 14 (MAHPSQLGFQDAAS). A helical membrane pass occupies residues 15 to 45 (PVMEELLHFHDHALMIVFLISTLVLYIIVAM). Residues 46 to 59 (VSTKLTNKYILDSQ) are Mitochondrial matrix-facing. The helical transmembrane segment at 60 to 87 (EIEIIWTVLPAVILILIALPSLRILYLM) threads the bilayer. The Mitochondrial intermembrane portion of the chain corresponds to 88–230 (DEINDPHLTI…SWSSLMLEDA (143 aa)). Residues His-161, Cys-196, Glu-198, Cys-200, His-204, and Met-207 each contribute to the Cu cation site. Glu-198 provides a ligand contact to Mg(2+).

It belongs to the cytochrome c oxidase subunit 2 family. As to quaternary structure, component of the cytochrome c oxidase (complex IV, CIV), a multisubunit enzyme composed of 14 subunits. The complex is composed of a catalytic core of 3 subunits MT-CO1, MT-CO2 and MT-CO3, encoded in the mitochondrial DNA, and 11 supernumerary subunits COX4I, COX5A, COX5B, COX6A, COX6B, COX6C, COX7A, COX7B, COX7C, COX8 and NDUFA4, which are encoded in the nuclear genome. The complex exists as a monomer or a dimer and forms supercomplexes (SCs) in the inner mitochondrial membrane with NADH-ubiquinone oxidoreductase (complex I, CI) and ubiquinol-cytochrome c oxidoreductase (cytochrome b-c1 complex, complex III, CIII), resulting in different assemblies (supercomplex SCI(1)III(2)IV(1) and megacomplex MCI(2)III(2)IV(2)). Found in a complex with TMEM177, COA6, COX18, COX20, SCO1 and SCO2. Interacts with TMEM177 in a COX20-dependent manner. Interacts with COX20. Interacts with COX16. Cu cation serves as cofactor.

It localises to the mitochondrion inner membrane. It carries out the reaction 4 Fe(II)-[cytochrome c] + O2 + 8 H(+)(in) = 4 Fe(III)-[cytochrome c] + 2 H2O + 4 H(+)(out). Functionally, component of the cytochrome c oxidase, the last enzyme in the mitochondrial electron transport chain which drives oxidative phosphorylation. The respiratory chain contains 3 multisubunit complexes succinate dehydrogenase (complex II, CII), ubiquinol-cytochrome c oxidoreductase (cytochrome b-c1 complex, complex III, CIII) and cytochrome c oxidase (complex IV, CIV), that cooperate to transfer electrons derived from NADH and succinate to molecular oxygen, creating an electrochemical gradient over the inner membrane that drives transmembrane transport and the ATP synthase. Cytochrome c oxidase is the component of the respiratory chain that catalyzes the reduction of oxygen to water. Electrons originating from reduced cytochrome c in the intermembrane space (IMS) are transferred via the dinuclear copper A center (CU(A)) of subunit 2 and heme A of subunit 1 to the active site in subunit 1, a binuclear center (BNC) formed by heme A3 and copper B (CU(B)). The BNC reduces molecular oxygen to 2 water molecules using 4 electrons from cytochrome c in the IMS and 4 protons from the mitochondrial matrix. This Gadus morhua (Atlantic cod) protein is Cytochrome c oxidase subunit 2 (mt-co2).